A 142-amino-acid chain; its full sequence is Holo-[acyl-carrier-protein] synthase (142 aa).

Positions 8 and 57 each coordinate Mg(2+).

The protein belongs to the P-Pant transferase superfamily. AcpS family. The cofactor is Mg(2+).

The protein localises to the cytoplasm. It carries out the reaction apo-[ACP] + CoA = holo-[ACP] + adenosine 3',5'-bisphosphate + H(+). In terms of biological role, transfers the 4'-phosphopantetheine moiety from coenzyme A to a Ser of acyl-carrier-protein. The protein is Holo-[acyl-carrier-protein] synthase of Ruegeria sp. (strain TM1040) (Silicibacter sp.).